Reading from the N-terminus, the 393-residue chain is Iripin-3 (393 aa).

The signal sequence occupies residues 1–16 (MKVITAFLSVFVLCSA). Asn-104 and Asn-265 each carry an N-linked (GlcNAc...) asparagine glycan.

It belongs to the serpin family. In terms of assembly, interacts with human KLKB1. Interacts with human ST14. Interacts with human F2 (thrombin). Saliva (at protein level). Expressed in salivary gland. Expressed in ovary during blood feeding.

The protein localises to the secreted. In terms of biological role, serine protease inhibitor that modulates blood feeding of ticks on vertebrate species. Moderately inhibits host plasma kallikrein (KLKB1), matriptase (ST14), trypsin, plasmin (PLG), thrombin (F2) and coagulation factor VIIa (F7). Slightly inhibits host alpha-chymotrypsin, tPA/tissue-type plasminogen activator (PLAT), uPA/urokinase-type plasminogen activator (PLAU) and coagulation factor XIIa (F12). Slightly inhibits the extrinsic pathway while not affecting the intrinsic and common pathways of host blood coagulation. Decreases synthesis and secretion of IL6 by mouse bone marrow-derived macrophages. Decreases viability of mouse B- and T-cells. Decreases proliferation of mouse CD4+ T-cells in response to stimulation. Inhibits Th1 immune responses in mouse cells. Promotes differentiation of mouse regulatory T-cells. The protein is Iripin-3 of Ixodes ricinus (Common tick).